Here is a 272-residue protein sequence, read N- to C-terminus: Catabolic 3-dehydroquinate dehydratase (272 aa).

3-dehydroquinate contacts are provided by residues Glu66 to Arg68 and Arg102. The active-site Proton donor/acceptor is His163. The Schiff-base intermediate with substrate role is filled by Lys190. 3-dehydroquinate-binding residues include Arg232, Ser251, and Gln255.

This sequence belongs to the type-I 3-dehydroquinase family.

It carries out the reaction 3-dehydroquinate = 3-dehydroshikimate + H2O. It participates in aromatic compound metabolism; 3,4-dihydroxybenzoate biosynthesis; 3,4-dihydroxybenzoate from 3-dehydroquinate: step 1/2. Functionally, involved in the biosynthesis of protocatechuate. Catalyzes the catabolic dehydration of 3-dehydroquinate (DHQ) to yield 3-dehydroshikimate. The sequence is that of Catabolic 3-dehydroquinate dehydratase from Acinetobacter baylyi (strain ATCC 33305 / BD413 / ADP1).